We begin with the raw amino-acid sequence, 183 residues long: Peptide deformylase (183 aa).

Residues C110 and H153 each coordinate Fe cation. Residue E154 is part of the active site. A Fe cation-binding site is contributed by H157.

Belongs to the polypeptide deformylase family. The cofactor is Fe(2+).

The enzyme catalyses N-terminal N-formyl-L-methionyl-[peptide] + H2O = N-terminal L-methionyl-[peptide] + formate. Its function is as follows. Removes the formyl group from the N-terminal Met of newly synthesized proteins. Requires at least a dipeptide for an efficient rate of reaction. N-terminal L-methionine is a prerequisite for activity but the enzyme has broad specificity at other positions. This is Peptide deformylase from Listeria welshimeri serovar 6b (strain ATCC 35897 / DSM 20650 / CCUG 15529 / CIP 8149 / NCTC 11857 / SLCC 5334 / V8).